A 32-amino-acid polypeptide reads, in one-letter code: Corticostatin-related peptide RK-1 (32 aa).

Cystine bridges form between C3/C29, C5/C19, and C9/C28.

The protein localises to the secreted. Its function is as follows. Has antimicrobial activity against E.coli and activates ion channel activity. In Oryctolagus cuniculus (Rabbit), this protein is Corticostatin-related peptide RK-1.